Here is a 316-residue protein sequence, read N- to C-terminus: Ribosomal RNA small subunit methyltransferase H (316 aa).

S-adenosyl-L-methionine is bound by residues 35-37, D55, F84, D105, and Q112; that span reads AGH.

The protein belongs to the methyltransferase superfamily. RsmH family.

The protein resides in the cytoplasm. The catalysed reaction is cytidine(1402) in 16S rRNA + S-adenosyl-L-methionine = N(4)-methylcytidine(1402) in 16S rRNA + S-adenosyl-L-homocysteine + H(+). Functionally, specifically methylates the N4 position of cytidine in position 1402 (C1402) of 16S rRNA. This Streptococcus suis (strain 05ZYH33) protein is Ribosomal RNA small subunit methyltransferase H.